Consider the following 172-residue polypeptide: Probable metallophosphoesterase MTH_1774 (172 aa).

A divalent metal cation is bound by residues D8, H10, D37, N59, H85, H113, and H115.

It belongs to the metallophosphoesterase superfamily. YfcE family. The cofactor is a divalent metal cation.

The sequence is that of Probable metallophosphoesterase MTH_1774 from Methanothermobacter thermautotrophicus (strain ATCC 29096 / DSM 1053 / JCM 10044 / NBRC 100330 / Delta H) (Methanobacterium thermoautotrophicum).